We begin with the raw amino-acid sequence, 565 residues long: Dihydroxy-acid dehydratase (565 aa).

A Mg(2+)-binding site is contributed by Asp-80. Cys-121 lines the [2Fe-2S] cluster pocket. 2 residues coordinate Mg(2+): Asp-122 and Lys-123. Lys-123 bears the N6-carboxylysine mark. Cys-194 contacts [2Fe-2S] cluster. Mg(2+) is bound at residue Glu-447. Ser-473 serves as the catalytic Proton acceptor.

This sequence belongs to the IlvD/Edd family. As to quaternary structure, homodimer. [2Fe-2S] cluster is required as a cofactor. It depends on Mg(2+) as a cofactor.

It carries out the reaction (2R)-2,3-dihydroxy-3-methylbutanoate = 3-methyl-2-oxobutanoate + H2O. It catalyses the reaction (2R,3R)-2,3-dihydroxy-3-methylpentanoate = (S)-3-methyl-2-oxopentanoate + H2O. The protein operates within amino-acid biosynthesis; L-isoleucine biosynthesis; L-isoleucine from 2-oxobutanoate: step 3/4. Its pathway is amino-acid biosynthesis; L-valine biosynthesis; L-valine from pyruvate: step 3/4. Its function is as follows. Functions in the biosynthesis of branched-chain amino acids. Catalyzes the dehydration of (2R,3R)-2,3-dihydroxy-3-methylpentanoate (2,3-dihydroxy-3-methylvalerate) into 2-oxo-3-methylpentanoate (2-oxo-3-methylvalerate) and of (2R)-2,3-dihydroxy-3-methylbutanoate (2,3-dihydroxyisovalerate) into 2-oxo-3-methylbutanoate (2-oxoisovalerate), the penultimate precursor to L-isoleucine and L-valine, respectively. This is Dihydroxy-acid dehydratase from Chlorobium luteolum (strain DSM 273 / BCRC 81028 / 2530) (Pelodictyon luteolum).